The chain runs to 314 residues: DNA topoisomerase 1 (314 aa).

One can recognise a Topo IB-type catalytic domain in the interval 73–314; sequence GKMHVQRRNS…TDYITNTQTV (242 aa). Tyr-273 (O-(3'-phospho-DNA)-tyrosine intermediate) is an active-site residue.

This sequence belongs to the type IB topoisomerase family.

The enzyme catalyses ATP-independent breakage of single-stranded DNA, followed by passage and rejoining.. Its function is as follows. Releases the supercoiling and torsional tension of DNA introduced during the DNA replication and transcription by transiently cleaving and rejoining one strand of the DNA duplex. Introduces a single-strand break via transesterification at a target site in duplex DNA. The scissile phosphodiester is attacked by the catalytic tyrosine of the enzyme, resulting in the formation of a DNA-(3'-phosphotyrosyl)-enzyme intermediate and the expulsion of a 5'-OH DNA strand. The free DNA strand then undergoes passage around the unbroken strand thus removing DNA supercoils. Finally, in the religation step, the DNA 5'-OH attacks the covalent intermediate to expel the active-site tyrosine and restore the DNA phosphodiester backbone. The protein is DNA topoisomerase 1 (TOP1) of Oryctolagus cuniculus (Rabbit).